The primary structure comprises 323 residues: tRNA U34 carboxymethyltransferase (323 aa).

Residues Lys90, Trp104, Lys109, Gly129, 182–183 (IE), Met197, Tyr201, and Arg316 each bind carboxy-S-adenosyl-L-methionine.

The protein belongs to the class I-like SAM-binding methyltransferase superfamily. CmoB family. As to quaternary structure, homotetramer.

The catalysed reaction is carboxy-S-adenosyl-L-methionine + 5-hydroxyuridine(34) in tRNA = 5-carboxymethoxyuridine(34) in tRNA + S-adenosyl-L-homocysteine + H(+). Catalyzes carboxymethyl transfer from carboxy-S-adenosyl-L-methionine (Cx-SAM) to 5-hydroxyuridine (ho5U) to form 5-carboxymethoxyuridine (cmo5U) at position 34 in tRNAs. This chain is tRNA U34 carboxymethyltransferase, found in Idiomarina loihiensis (strain ATCC BAA-735 / DSM 15497 / L2-TR).